Consider the following 298-residue polypeptide: MTRHGKNCTAGAVYTYYEKKKDTAASGYGTQTVRLSKDAVKDFDCCCLSLQPCKDPVVTSDGYIYEKEAILEYILHQKKEIARQMKAYDKQKNAKKAEMDELNKAAKESQMKAFLDKEMTIVSKPLNPFTRKSDSGADTAEPSGSQQSSEEKGKQLPSFWIPSLTPEAKTSLVKKPDKTVYCPMSGKPLKMKDLIPVHFTAVDEKVDRVGLINRQDRYVCAVTRDMLGNSVPCAVLRPSGAVVTMECVEKLIKKDMIDPISGDKLHERDIIMLQRGGTGFSGSGVLLQAKEARPVMQA.

The Nuclear localization signal motif lies at 78 to 101; it reads KKEIARQMKAYDKQKNAKKAEMDE. The segment at 126 to 157 is disordered; sequence LNPFTRKSDSGADTAEPSGSQQSSEEKGKQLP.

The protein belongs to the NOSIP family.

The protein localises to the cytoplasm. It localises to the nucleus. The enzyme catalyses S-ubiquitinyl-[E2 ubiquitin-conjugating enzyme]-L-cysteine + [acceptor protein]-L-lysine = [E2 ubiquitin-conjugating enzyme]-L-cysteine + N(6)-ubiquitinyl-[acceptor protein]-L-lysine.. Its function is as follows. E3 ubiquitin-protein ligase that is essential for proper development of the forebrain, the eye, and the face. Negatively regulates nitric oxide production by inducing nitric oxide synthase translocation to actin cytoskeleton and inhibiting its enzymatic activity. This is Nitric oxide synthase-interacting protein (nosip) from Xenopus tropicalis (Western clawed frog).